The sequence spans 448 residues: Homogentisate 1,2-dioxygenase (448 aa).

The disordered stretch occupies residues 1-26; sequence MNMLAPAAKNAFTPASPDRPAYQSGF. H302 (proton acceptor) is an active-site residue. Residues H345 and E351 each contribute to the Fe cation site. Y360 and H381 together coordinate homogentisate. Position 381 (H381) interacts with Fe cation.

This sequence belongs to the homogentisate dioxygenase family. In terms of assembly, hexamer; dimer of trimers. Requires Fe cation as cofactor.

It catalyses the reaction homogentisate + O2 = 4-maleylacetoacetate + H(+). It functions in the pathway amino-acid degradation; L-phenylalanine degradation; acetoacetate and fumarate from L-phenylalanine: step 4/6. Functionally, involved in the catabolism of homogentisate (2,5-dihydroxyphenylacetate or 2,5-OH-PhAc), a central intermediate in the degradation of phenylalanine and tyrosine. Catalyzes the oxidative ring cleavage of the aromatic ring of homogentisate to yield maleylacetoacetate. This is Homogentisate 1,2-dioxygenase from Ralstonia nicotianae (strain ATCC BAA-1114 / GMI1000) (Ralstonia solanacearum).